Here is a 276-residue protein sequence, read N- to C-terminus: Phosphatidylcholine synthase (276 aa).

Over 1-30 (MGGQKEMADSVKTKLTGKLKAKKVTAPQAK) the chain is Cytoplasmic. A helical membrane pass occupies residues 31–51 (AFSVHLLTASGSFLAFLSVVA). Over 52 to 57 (ASDGRY) the chain is Periplasmic. The chain crosses the membrane as a helical span at residues 58-78 (TAMWWWLGLALFVDGIDGPIA). At 79 to 91 (RKLEVKYVLPNWS) the chain is on the cytoplasmic side. A helical transmembrane segment spans residues 92–112 (GELLDSIIDYVTYVLIPAFAL). Over 113 to 115 (YQS) the chain is Periplasmic. The chain crosses the membrane as a helical span at residues 116–136 (GFMGTNLSFISGAIIVVSSAI). Residues 137 to 146 (YYADTGMKTK) are Cytoplasmic-facing. The chain crosses the membrane as a helical span at residues 147-167 (ENFFKGFPVVWNMVVFTLFIV). The Periplasmic segment spans residues 168-171 (RPGE). The helical transmembrane segment at 172-192 (WVAFGTVVASAILSFLPINFL) threads the bilayer. The Cytoplasmic segment spans residues 193-202 (HPVRVVRLRP). Residues 203–223 (LNLTIFLLWCAFGVIALYYML) traverse the membrane as a helical segment. Topologically, residues 224-230 (DAPLWVR) are periplasmic. The helical transmembrane segment at 231–251 (IGISVTGLYIYFIGAIMQLFP) threads the bilayer. Residues 252–276 (SLGREAALAKARKLVEKQQKSGEAP) lie on the Cytoplasmic side of the membrane.

The protein belongs to the CDP-alcohol phosphatidyltransferase class-I family. Requires Mn(2+) as cofactor.

It localises to the cell inner membrane. It catalyses the reaction a CDP-1,2-diacyl-sn-glycerol + choline = a 1,2-diacyl-sn-glycero-3-phosphocholine + CMP + H(+). In terms of biological role, condenses choline with CDP-diglyceride to produce phosphatidylcholine and CMP. This is Phosphatidylcholine synthase from Brucella melitensis biotype 1 (strain ATCC 23456 / CCUG 17765 / NCTC 10094 / 16M).